The following is a 189-amino-acid chain: Peptidyl-tRNA hydrolase (189 aa).

A tRNA-binding site is contributed by Y14. H19 serves as the catalytic Proton acceptor. F64, N66, and N112 together coordinate tRNA.

This sequence belongs to the PTH family. In terms of assembly, monomer.

Its subcellular location is the cytoplasm. The catalysed reaction is an N-acyl-L-alpha-aminoacyl-tRNA + H2O = an N-acyl-L-amino acid + a tRNA + H(+). Hydrolyzes ribosome-free peptidyl-tRNAs (with 1 or more amino acids incorporated), which drop off the ribosome during protein synthesis, or as a result of ribosome stalling. Functionally, catalyzes the release of premature peptidyl moieties from peptidyl-tRNA molecules trapped in stalled 50S ribosomal subunits, and thus maintains levels of free tRNAs and 50S ribosomes. The protein is Peptidyl-tRNA hydrolase of Erythrobacter litoralis (strain HTCC2594).